A 103-amino-acid polypeptide reads, in one-letter code: SOSS complex subunit C (103 aa).

The protein belongs to the SOSS-C family. As to quaternary structure, belongs to the multiprotein complex Integrator. Component of the SOSS complex, composed of SOSS-B (SOSS-B1/NABP2 or SOSS-B2/NABP1), SOSS-A/INTS3 and SOSS-C/INIP.

The protein localises to the nucleus. Component of the SOSS complex, a multiprotein complex that functions downstream of the MRN complex to promote DNA repair and G2/M checkpoint. The SOSS complex associates with single-stranded DNA at DNA lesions and influences diverse endpoints in the cellular DNA damage response including cell-cycle checkpoint activation, recombinational repair and maintenance of genomic stability. Required for efficient homologous recombination-dependent repair of double-strand breaks (DSBs). The chain is SOSS complex subunit C (INIP) from Gallus gallus (Chicken).